The chain runs to 620 residues: Leucine-rich repeat and immunoglobulin-like domain-containing nogo receptor-interacting protein 1 (620 aa).

Positions M1–G41 are cleaved as a signal peptide. Intrachain disulfides connect C42/C48 and C46/C57. Positions C42–T71 constitute an LRRNT domain. The Extracellular segment spans residues C42–T561. LRR repeat units lie at residues E72–S93, H96–N117, N120–G141, N144–D165, N168–G189, S192–H213, G216–R237, N264–H285, Y288–E309, R312–G333, and Y336–S357. N-linked (GlcNAc...) asparagine glycosylation occurs at N144. N202 is a glycosylation site (N-linked (GlcNAc...) asparagine). Residues N264, N274, and N293 are each glycosylated (N-linked (GlcNAc...) asparagine). An N-linked (GlcNAc...) asparagine glycan is attached at N341. Positions N369–R423 constitute an LRRCT domain. Intrachain disulfides connect C373–C396, C375–C421, and C446–C497. One can recognise an Ig-like C2-type domain in the interval P411 to H513. Residues N492, N505, N526, and N542 are each glycosylated (N-linked (GlcNAc...) asparagine). The helical transmembrane segment at T562–W582 threads the bilayer. Over S583–I620 the chain is Cytoplasmic. S602 carries the phosphoserine modification.

Homotetramer. Forms a ternary complex with RTN4R/NGFR and RTN4R/TNFRSF19. Interacts with NGRF and MYT1L. Interacts with RTN4R. Post-translationally, N-glycosylated. Contains predominantly high-mannose glycans. In terms of tissue distribution, expressed exclusively in the central nervous system. Highest level in the in amygdala, hippocampus, thalamus and cerebral cortex. In the rest of the brain a basal expression seems to be always present. Up-regulated in substantia nigra neurons from Parkinson disease patients.

Its subcellular location is the cell membrane. Functionally, functional component of the Nogo receptor signaling complex (RTN4R/NGFR) in RhoA activation responsible for some inhibition of axonal regeneration by myelin-associated factors. Is also an important negative regulator of oligodentrocyte differentiation and axonal myelination. Acts in conjunction with RTN4 and RTN4R in regulating neuronal precursor cell motility during cortical development. The sequence is that of Leucine-rich repeat and immunoglobulin-like domain-containing nogo receptor-interacting protein 1 (LINGO1) from Homo sapiens (Human).